The sequence spans 133 residues: Small ribosomal subunit protein uS9 (133 aa).

Over residues 97 to 113 (SKQELKSHGFLTRDPRK) the composition is skewed to basic and acidic residues. Residues 97 to 133 (SKQELKSHGFLTRDPRKKERKKYGHKKARKSFQFSKR) are disordered. The segment covering 114–133 (KERKKYGHKKARKSFQFSKR) has biased composition (basic residues).

This sequence belongs to the universal ribosomal protein uS9 family.

This chain is Small ribosomal subunit protein uS9, found in Chlamydia abortus (strain DSM 27085 / S26/3) (Chlamydophila abortus).